The chain runs to 1121 residues: Transcription factor CSR2 (1121 aa).

Residues Ser23, Ser46, and Ser127 each carry the phosphoserine modification. Disordered stretches follow at residues 273–342 (PLHT…RSLP), 513–532 (HTQL…PQKL), 579–600 (LKRN…GLAM), and 837–860 (IPQD…LQTS). Residues 276–310 (TQRTSPSNTARTGNAMDTSNSDRASPASNNNTTDA) show a composition bias toward polar residues. Composition is skewed to low complexity over residues 318–329 (NNNPMNNNNSPA), 519–529 (SRPRSSSISSP), and 582–597 (NNSN…SSSG). Ser327 carries the phosphoserine modification. Over residues 837–846 (IPQDKNHNEV) the composition is skewed to basic and acidic residues. Residue Lys841 forms a Glycyl lysine isopeptide (Lys-Gly) (interchain with G-Cter in ubiquitin) linkage. Over residues 847-860 (NDTNGNSNTSLQTS) the composition is skewed to polar residues. Residue Ser987 is modified to Phosphoserine. A compositionally biased stretch (polar residues) spans 999-1009 (KTTAVSDSSNG). 2 disordered regions span residues 999–1022 (KTTA…QARP) and 1075–1121 (TPRY…EISS). Low complexity predominate over residues 1084–1093 (TNTDYNYNDN).

Belongs to the CSR2 family. Phosphorylated by CDC28.

It localises to the cytoplasm. It is found in the nucleus. Its function is as follows. Transcription factor involved in the regulation of fermentation and aerobic oxidation. Acts as a repressor of CYC1, which is involved in electron flow through the mitochondria under aerobic condition. Required for pseudohyphal formation upon nitrogen starvation. May be involved in viability at stationary phase and aging. This chain is Transcription factor CSR2 (CSR2), found in Saccharomyces cerevisiae (strain ATCC 204508 / S288c) (Baker's yeast).